The chain runs to 237 residues: Phosphoribosylaminoimidazole-succinocarboxamide synthase (237 aa).

The protein belongs to the SAICAR synthetase family.

The enzyme catalyses 5-amino-1-(5-phospho-D-ribosyl)imidazole-4-carboxylate + L-aspartate + ATP = (2S)-2-[5-amino-1-(5-phospho-beta-D-ribosyl)imidazole-4-carboxamido]succinate + ADP + phosphate + 2 H(+). It participates in purine metabolism; IMP biosynthesis via de novo pathway; 5-amino-1-(5-phospho-D-ribosyl)imidazole-4-carboxamide from 5-amino-1-(5-phospho-D-ribosyl)imidazole-4-carboxylate: step 1/2. This is Phosphoribosylaminoimidazole-succinocarboxamide synthase from Enterobacter sp. (strain 638).